Reading from the N-terminus, the 291-residue chain is DegV domain-containing protein CPE0026 (291 aa).

One can recognise a DegV domain in the interval phenylalanine 4–glycine 286. Positions 63 and 95 each coordinate hexadecanoate.

In terms of biological role, may bind long-chain fatty acids, such as palmitate, and may play a role in lipid transport or fatty acid metabolism. The sequence is that of DegV domain-containing protein CPE0026 from Clostridium perfringens (strain 13 / Type A).